The sequence spans 419 residues: MSVAADMEVMARKAKEASRAMAAASGAAKDAFLAGLAGLLETRREGVLAANAADLEKARAAGMDAPRLDRLTLTPAVMDGMAKACREIIALPDPVGAIESMRPRPNGLLVGCMRVPLGVICMIYESRPNVTIDAAILCLKAGNAVILKGGSEALASNLALAGLLREALEASGLPADAAQLVPTADRAAVAALCKLDELIDVMIPRGGEGLIRAVVSQATMPVLKHYKGVCHAYIDSGADEARAETIVVNAKAQRPGVCNALECLLVHVDAAPTFLPRIGDALRRVGVTMRACPRSLPLLGEGAVAAMPEDFGHEFHDLILAVKVVDSLDEALTHIHRHGSGHTEVICTENHDRAMDFLRRADASMVGVNCSTRFNDGGELGLGAEIGISTSKLHSYGPMGLVELTSAKFVVLGQGQVRG.

It belongs to the gamma-glutamyl phosphate reductase family.

Its subcellular location is the cytoplasm. It catalyses the reaction L-glutamate 5-semialdehyde + phosphate + NADP(+) = L-glutamyl 5-phosphate + NADPH + H(+). It functions in the pathway amino-acid biosynthesis; L-proline biosynthesis; L-glutamate 5-semialdehyde from L-glutamate: step 2/2. Its function is as follows. Catalyzes the NADPH-dependent reduction of L-glutamate 5-phosphate into L-glutamate 5-semialdehyde and phosphate. The product spontaneously undergoes cyclization to form 1-pyrroline-5-carboxylate. The protein is Gamma-glutamyl phosphate reductase of Solidesulfovibrio magneticus (strain ATCC 700980 / DSM 13731 / RS-1) (Desulfovibrio magneticus).